Here is a 571-residue protein sequence, read N- to C-terminus: 5' exonuclease Apollo (571 aa).

Disordered stretches follow at residues 346–386 (TSRP…TDRN) and 431–487 (MDDN…SMHD). 2 stretches are compositionally biased toward basic and acidic residues: residues 367 to 386 (NHDD…TDRN) and 453 to 468 (ECDH…EKSP). Positions 470-487 (MGSTNSGEMCSSMDSMHD) are enriched in polar residues. The short motif at 501–532 (NPQSVTSAIPITLESEQFEHWLLENFTIPAEE) is the TBM element.

It belongs to the DNA repair metallo-beta-lactamase (DRMBL) family. In terms of assembly, interacts with terf2; the interaction is direct.

The protein resides in the chromosome. It localises to the telomere. Its subcellular location is the nucleus. It carries out the reaction a beta-lactam + H2O = a substituted beta-amino acid. Functionally, 5'-3' exonuclease that plays a central role in telomere maintenance and protection during S-phase. Participates in the protection of telomeres against non-homologous end-joining (NHEJ)-mediated repair, thereby ensuring that telomeres do not fuse. Plays a key role in telomeric loop (T loop) formation by being recruited by terf2 at the leading end telomeres and by processing leading-end telomeres immediately after their replication via its exonuclease activity: generates 3' single-stranded overhang at the leading end telomeres avoiding blunt leading-end telomeres that are vulnerable to end-joining reactions and expose the telomere end in a manner that activates the DNA repair pathways. Possesses beta-lactamase activity, catalyzing the hydrolysis of penicillin G and nitrocefin. Exhibits no activity towards other beta-lactam antibiotic classes including cephalosporins (cefotaxime) and carbapenems (imipenem). The chain is 5' exonuclease Apollo (dclre1b) from Danio rerio (Zebrafish).